Reading from the N-terminus, the 423-residue chain is Serine hydroxymethyltransferase (423 aa).

121-123 (GHI) contacts (6S)-5,6,7,8-tetrahydrofolate. K227 carries the post-translational modification N6-(pyridoxal phosphate)lysine. E242 contributes to the (6S)-5,6,7,8-tetrahydrofolate binding site.

The protein belongs to the SHMT family. In terms of assembly, homodimer. The cofactor is pyridoxal 5'-phosphate.

It localises to the cytoplasm. The enzyme catalyses 5,10-methylenetetrahydromethanopterin + glycine + H2O = 5,6,7,8-tetrahydromethanopterin + L-serine. The protein operates within amino-acid biosynthesis; glycine biosynthesis; glycine from L-serine: step 1/1. In terms of biological role, catalyzes the reversible interconversion of serine and glycine with tetrahydromethanopterin (H4MPT) serving as the one-carbon carrier. Also exhibits a pteridine-independent aldolase activity toward beta-hydroxyamino acids, producing glycine and aldehydes, via a retro-aldol mechanism. The polypeptide is Serine hydroxymethyltransferase (Methanothermobacter marburgensis (strain ATCC BAA-927 / DSM 2133 / JCM 14651 / NBRC 100331 / OCM 82 / Marburg) (Methanobacterium thermoautotrophicum)).